The sequence spans 83 residues: uncharacterized protein (83 aa).

This is an uncharacterized protein from Acidianus bottle-shaped virus (isolate Italy/Pozzuoli) (ABV).